Consider the following 117-residue polypeptide: Holo-[acyl-carrier-protein] synthase (117 aa).

Mg(2+) contacts are provided by aspartate 8 and glutamate 58.

This sequence belongs to the P-Pant transferase superfamily. AcpS family. Mg(2+) is required as a cofactor.

The protein localises to the cytoplasm. The enzyme catalyses apo-[ACP] + CoA = holo-[ACP] + adenosine 3',5'-bisphosphate + H(+). Functionally, transfers the 4'-phosphopantetheine moiety from coenzyme A to a Ser of acyl-carrier-protein. The sequence is that of Holo-[acyl-carrier-protein] synthase from Staphylococcus epidermidis (strain ATCC 35984 / DSM 28319 / BCRC 17069 / CCUG 31568 / BM 3577 / RP62A).